The primary structure comprises 1020 residues: Fanconi-associated nuclease 1 (1020 aa).

Positions Met-1–Lys-11 are enriched in basic and acidic residues. Positions Met-1–Lys-24 are disordered. The short motif at Arg-14–Thr-22 is the D-box element. A UBZ4-type zinc finger spans residues Lys-41–Val-69. Zn(2+) contacts are provided by Cys-44, Cys-47, His-59, and Cys-64. The segment at Lys-173–Asn-208 is disordered. A compositionally biased stretch (polar residues) spans Gln-180 to Asp-195. A KEN box motif is present at residues Lys-212 to Asn-214. The span at Glu-224–Gln-242 shows a compositional bias: basic and acidic residues. Disordered stretches follow at residues Glu-224–Thr-252 and Leu-269–Arg-288. Positions Leu-269–Gly-278 are enriched in polar residues. Residues Ser-673–Ala-737 are a coiled coil. Mn(2+)-binding residues include Glu-837, Asp-963, Glu-978, and Val-979. A VRR-NUC domain is found at Ala-898–Val-1010.

The protein belongs to the FAN1 family. As to quaternary structure, interacts with FANCD2 (when monoubiquitinated). Interacts with FANCI, MLH1, MLH3 and PMS2. Mn(2+) serves as cofactor. Mg(2+) is required as a cofactor. Ubiquitinated and degraded during mitotic exit by the APC/C-Cdh1 complex.

The protein resides in the nucleus. It carries out the reaction Hydrolytically removes 5'-nucleotides successively from the 3'-hydroxy termini of 3'-hydroxy-terminated oligonucleotides.. Its function is as follows. Nuclease required for the repair of DNA interstrand cross-links (ICL) recruited at sites of DNA damage by monoubiquitinated FANCD2. Specifically involved in repair of ICL-induced DNA breaks by being required for efficient homologous recombination, probably in the resolution of homologous recombination intermediates. Not involved in DNA double-strand breaks resection. Acts as a 5'-3' exonuclease that anchors at a cut end of DNA and cleaves DNA successively at every third nucleotide, allowing to excise an ICL from one strand through flanking incisions. Probably keeps excising with 3'-flap annealing until it reaches and unhooks the ICL. Acts at sites that have a 5'-terminal phosphate anchor at a nick or a 1- or 2-nucleotide flap and is augmented by a 3' flap. Also has endonuclease activity toward 5'-flaps. In Mus musculus (Mouse), this protein is Fanconi-associated nuclease 1.